Reading from the N-terminus, the 48-residue chain is uncharacterized protein (48 aa).

Residues 1 to 30 are disordered; the sequence is MLGRTKLGNRNAQANNNAKKKNGFQTHFDS.

This is an uncharacterized protein from Bacillus subtilis (strain 168).